A 264-amino-acid polypeptide reads, in one-letter code: DNA repair protein RecO (264 aa).

The protein belongs to the RecO family.

Involved in DNA repair and RecF pathway recombination. In Chlorobium luteolum (strain DSM 273 / BCRC 81028 / 2530) (Pelodictyon luteolum), this protein is DNA repair protein RecO.